A 500-amino-acid polypeptide reads, in one-letter code: Glycerol kinase (500 aa).

T13 contacts ADP. Positions 13, 14, and 15 each coordinate ATP. T13 provides a ligand contact to sn-glycerol 3-phosphate. Residue R17 coordinates ADP. Sn-glycerol 3-phosphate-binding residues include R83, E84, Y135, and D244. The glycerol site is built by R83, E84, Y135, D244, and Q245. T266 and G309 together coordinate ADP. ATP is bound by residues T266, G309, Q313, and G410. The ADP site is built by G410 and N414.

This sequence belongs to the FGGY kinase family.

It catalyses the reaction glycerol + ATP = sn-glycerol 3-phosphate + ADP + H(+). Its pathway is polyol metabolism; glycerol degradation via glycerol kinase pathway; sn-glycerol 3-phosphate from glycerol: step 1/1. With respect to regulation, inhibited by fructose 1,6-bisphosphate (FBP). Key enzyme in the regulation of glycerol uptake and metabolism. Catalyzes the phosphorylation of glycerol to yield sn-glycerol 3-phosphate. The sequence is that of Glycerol kinase from Burkholderia multivorans (strain ATCC 17616 / 249).